The sequence spans 412 residues: Aspartokinase (412 aa).

2 ACT domains span residues 266 to 340 (LTIR…GDTN) and 346 to 412 (IVGV…RQGE).

This sequence belongs to the aspartokinase family.

The enzyme catalyses L-aspartate + ATP = 4-phospho-L-aspartate + ADP. The protein operates within amino-acid biosynthesis; L-lysine biosynthesis via DAP pathway; (S)-tetrahydrodipicolinate from L-aspartate: step 1/4. Its pathway is amino-acid biosynthesis; L-methionine biosynthesis via de novo pathway; L-homoserine from L-aspartate: step 1/3. It participates in amino-acid biosynthesis; L-threonine biosynthesis; L-threonine from L-aspartate: step 1/5. This chain is Aspartokinase (lysC), found in Pseudomonas aeruginosa (strain ATCC 15692 / DSM 22644 / CIP 104116 / JCM 14847 / LMG 12228 / 1C / PRS 101 / PAO1).